A 186-amino-acid chain; its full sequence is ADP-ribosylation factor-like protein 8B (186 aa).

The segment at residues 1-19 (MLALISRLLDWFRSLFWKE) is an intramembrane region (note=Mediates targeting to membranes). GTP contacts are provided by residues 29-35 (QYSGKTT), 71-75 (DIGGQ), and 130-133 (NKRD). Residue K141 forms a Glycyl lysine isopeptide (Lys-Gly) (interchain with G-Cter in ubiquitin) linkage.

It belongs to the small GTPase superfamily. Arf family. As to quaternary structure, interacts with tubulin. Interacts with BORCS5; recruits ARL8B to lysosomes. Interacts with VPS41; the interaction mediates the recruitment of the HOPS complex to lysosomes. Interacts (GTP-bound form) with PLEKHM2 (via RUN domain); the interaction is required to recruit the motor protein kinesin-1 on lysosomes. Interacts (GTP-bound form) with PLEKHM1 (via RUN domain); the interaction is required for PLEKHM1 localization to lysosomes and for ARL8B function in delivery and degradation of endocytic and autophagic cargo in lysosomes. PLEKHM1 and PLEKHM2 compete for interaction with ARL8B. Interacts (GTP-bound form) with RUFY1; the interaction is required for RUFY1 endosomal location. When GTP-bound, interacts with RUFY3 and RUFY4, but not with RUFY1, nor RUFY2. In terms of processing, ubiquitinated at Lys-141 by RNF167, leading to its degradation.

The protein localises to the late endosome membrane. The protein resides in the lysosome membrane. It is found in the cytoplasm. It localises to the cytoskeleton. Its subcellular location is the spindle. The protein localises to the cell projection. The protein resides in the axon. It is found in the synapse. It localises to the cytolytic granule membrane. Its subcellular location is the early endosome membrane. The enzyme catalyses GTP + H2O = GDP + phosphate + H(+). Its function is as follows. Small GTPase which cycles between active GTP-bound and inactive GDP-bound states. In its active state, binds to a variety of effector proteins playing a key role in the regulation of lysosomal positioning which is important for nutrient sensing, natural killer cell-mediated cytotoxicity and antigen presentation. Along with its effectors, orchestrates lysosomal transport and fusion. Localizes specifically to lysosomal membranes and mediates anterograde lysosomal motility by recruiting PLEKHM2, which in turn recruits the motor protein kinesin-1 on lysosomes. Required for lysosomal and cytolytic granule exocytosis. Critical factor involved in NK cell-mediated cytotoxicity. Drives the polarization of cytolytic granules and microtubule-organizing centers (MTOCs) toward the immune synapse between effector NK lymphocytes and target cells. In neurons, mediates the anterograde axonal long-range transport of presynaptic lysosome-related vesicles required for presynaptic biogenesis and synaptic function. Also acts as a regulator of endosome to lysosome trafficking pathways of special significance for host defense. Recruits RUFY1 onto early endosomes regulating endosomes to trans-Golgi network proteins retrieval. Regulates cargo trafficking to lysosomes by binding to PLEKHM1 and recruiting the HOPS subunit VPS41, resulting in functional assembly of the HOPS complex on lysosomal membranes. Plays an important role in cargo delivery to lysosomes for antigen presentation and microbial killing. Directs the intersection of CD1d with lipid antigens in lysosomes, and plays a role in intersecting phagosomes with lysosomes to generate phagolysosomes that kill microbes. Involved in the process of MHC II presentation. Regulates the delivery of antigens to lysosomes and the formation of MHC II-peptide complexes through the recruitment of the HOPS complex to lysosomes allowing the fusion of late endosomes to lysosomes. May play a role in chromosome segregation. This is ADP-ribosylation factor-like protein 8B (ARL8B) from Pongo abelii (Sumatran orangutan).